We begin with the raw amino-acid sequence, 86 residues long: Small ribosomal subunit protein bS18 (86 aa).

It belongs to the bacterial ribosomal protein bS18 family. As to quaternary structure, part of the 30S ribosomal subunit. Forms a tight heterodimer with protein bS6.

In terms of biological role, binds as a heterodimer with protein bS6 to the central domain of the 16S rRNA, where it helps stabilize the platform of the 30S subunit. This Heliobacterium modesticaldum (strain ATCC 51547 / Ice1) protein is Small ribosomal subunit protein bS18.